A 237-amino-acid polypeptide reads, in one-letter code: Uridylate kinase (237 aa).

Residue 12–15 (KLSG) coordinates ATP. The tract at residues 20–25 (GEDGLG) is involved in allosteric activation by GTP. Residue G54 participates in UMP binding. The ATP site is built by G55 and R59. UMP is bound by residues D74 and 135–142 (TGNPFFTT). Residues T162, Y168, and D171 each contribute to the ATP site.

This sequence belongs to the UMP kinase family. Homohexamer.

The protein resides in the cytoplasm. It carries out the reaction UMP + ATP = UDP + ADP. It participates in pyrimidine metabolism; CTP biosynthesis via de novo pathway; UDP from UMP (UMPK route): step 1/1. Its activity is regulated as follows. Allosterically activated by GTP. Inhibited by UTP. Catalyzes the reversible phosphorylation of UMP to UDP. The chain is Uridylate kinase from Haemophilus influenzae (strain 86-028NP).